A 418-amino-acid polypeptide reads, in one-letter code: 26S proteasome regulatory subunit 6B (418 aa).

At Met-1 the chain carries N-acetylmethionine. Ser-21 is modified (phosphoserine). Position 25 is a phosphothreonine (Thr-25). Residue Ser-28 is modified to Phosphoserine. ATP is bound at residue 206 to 213 (GPPGCGKT). 2 positions are modified to N6-acetyllysine: Lys-397 and Lys-401.

The protein belongs to the AAA ATPase family. In terms of assembly, component of the 19S proteasome regulatory particle complex. The 26S proteasome consists of a 20S core particle (CP) and two 19S regulatory subunits (RP). The regulatory particle is made of a lid composed of 9 subunits, a base containing 6 ATPases including PSMC4 and few additional components. Interacts with NR1I3. Interacts with PAAF1. Interacts with TRIM5. Interacts with ZFAND1.

It is found in the cytoplasm. The protein localises to the nucleus. Functionally, component of the 26S proteasome, a multiprotein complex involved in the ATP-dependent degradation of ubiquitinated proteins. This complex plays a key role in the maintenance of protein homeostasis by removing misfolded or damaged proteins, which could impair cellular functions, and by removing proteins whose functions are no longer required. Therefore, the proteasome participates in numerous cellular processes, including cell cycle progression, apoptosis, or DNA damage repair. PSMC4 belongs to the heterohexameric ring of AAA (ATPases associated with diverse cellular activities) proteins that unfolds ubiquitinated target proteins that are concurrently translocated into a proteolytic chamber and degraded into peptides. In Mus musculus (Mouse), this protein is 26S proteasome regulatory subunit 6B (Psmc4).